A 1480-amino-acid polypeptide reads, in one-letter code: UDP-N-acetylglucosamine--peptide N-acetylglucosaminyltransferase (1480 aa).

4 TPR repeats span residues 38-71 (IFLY…SKQK), 113-146 (VQVL…STSN), 176-209 (ATIL…IKDP), and 288-321 (STIC…QPSF). Basic and acidic residues predominate over residues 468–485 (PQEKESPKSDKIASEKPL). The interval 468 to 497 (PQEKESPKSDKIASEKPLVESNPGRSRTPS) is disordered. 2 TPR repeats span residues 613–646 (YEPF…NPRF) and 648–680 (DGYL…DPDN). The disordered stretch occupies residues 1093 to 1128 (LSLDGSDATSSSVDSGIGSRTHSEAPIGGGDKDEGA). The span at 1099–1112 (DATSSSVDSGIGSR) shows a compositional bias: polar residues. UDP is bound by residues Gln-1269, Lys-1272, 1333 to 1336 (HIRR), 1351 to 1353 (GST), and Asp-1357.

It belongs to the glycosyltransferase 41 family. O-GlcNAc transferase subfamily.

The protein localises to the cytoplasm. The protein resides in the nucleus. It catalyses the reaction L-seryl-[protein] + UDP-N-acetyl-alpha-D-glucosamine = 3-O-(N-acetyl-beta-D-glucosaminyl)-L-seryl-[protein] + UDP + H(+). It carries out the reaction L-threonyl-[protein] + UDP-N-acetyl-alpha-D-glucosamine = 3-O-(N-acetyl-beta-D-glucosaminyl)-L-threonyl-[protein] + UDP + H(+). It participates in protein modification; protein glycosylation. Catalyzes the transfer of a single N-acetylglucosamine from UDP-GlcNAc to a serine or threonine residue in cytoplasmic and nuclear proteins resulting in their modification with a beta-linked N-acetylglucosamine (O-GlcNAc). This Giardia intestinalis (strain ATCC 50803 / WB clone C6) (Giardia lamblia) protein is UDP-N-acetylglucosamine--peptide N-acetylglucosaminyltransferase.